A 227-amino-acid chain; its full sequence is 2-C-methyl-D-erythritol 4-phosphate cytidylyltransferase (227 aa).

The protein belongs to the IspD/TarI cytidylyltransferase family. IspD subfamily.

The catalysed reaction is 2-C-methyl-D-erythritol 4-phosphate + CTP + H(+) = 4-CDP-2-C-methyl-D-erythritol + diphosphate. The protein operates within isoprenoid biosynthesis; isopentenyl diphosphate biosynthesis via DXP pathway; isopentenyl diphosphate from 1-deoxy-D-xylulose 5-phosphate: step 2/6. Functionally, catalyzes the formation of 4-diphosphocytidyl-2-C-methyl-D-erythritol from CTP and 2-C-methyl-D-erythritol 4-phosphate (MEP). The chain is 2-C-methyl-D-erythritol 4-phosphate cytidylyltransferase from Caldanaerobacter subterraneus subsp. tengcongensis (strain DSM 15242 / JCM 11007 / NBRC 100824 / MB4) (Thermoanaerobacter tengcongensis).